Consider the following 339-residue polypeptide: Senescence-specific cysteine protease SAG39 (339 aa).

The signal sequence occupies residues 1–23 (MAMAKALLFAILGCLCLCSAVLA). Cystine bridges form between cysteine 144–cysteine 187, cysteine 178–cysteine 220, and cysteine 276–cysteine 328. Cysteine 147 is an active-site residue. Catalysis depends on residues histidine 282 and asparagine 303.

It belongs to the peptidase C1 family.

It is found in the vacuole. In terms of biological role, cysteine protease that may have a developmental senescence specific cell death function during apoptosis, heavy metal detoxification, and hypersensitive response. The polypeptide is Senescence-specific cysteine protease SAG39 (Oryza sativa subsp. indica (Rice)).